Consider the following 164-residue polypeptide: Phosphopantetheine adenylyltransferase (164 aa).

Ser9 serves as a coordination point for substrate. ATP is bound by residues 9 to 10 (SF) and His17. Residues Lys41, Val78, and Arg92 each coordinate substrate. ATP contacts are provided by residues 93–95 (GLR), Glu103, and 128–134 (SRPITAT).

Belongs to the bacterial CoaD family. In terms of assembly, homohexamer. Requires Mg(2+) as cofactor.

It is found in the cytoplasm. It carries out the reaction (R)-4'-phosphopantetheine + ATP + H(+) = 3'-dephospho-CoA + diphosphate. Its pathway is cofactor biosynthesis; coenzyme A biosynthesis; CoA from (R)-pantothenate: step 4/5. Reversibly transfers an adenylyl group from ATP to 4'-phosphopantetheine, yielding dephospho-CoA (dPCoA) and pyrophosphate. The protein is Phosphopantetheine adenylyltransferase of Sinorhizobium fredii (strain NBRC 101917 / NGR234).